Here is a 569-residue protein sequence, read N- to C-terminus: Arginine--tRNA ligase (569 aa).

Residues 128 to 138 (ANPTGPLHVGH) carry the 'HIGH' region motif.

The protein belongs to the class-I aminoacyl-tRNA synthetase family. Monomer.

Its subcellular location is the cytoplasm. It carries out the reaction tRNA(Arg) + L-arginine + ATP = L-arginyl-tRNA(Arg) + AMP + diphosphate. The polypeptide is Arginine--tRNA ligase (Paracidovorax citrulli (strain AAC00-1) (Acidovorax citrulli)).